The following is a 437-amino-acid chain: Keratin, type I cytoskeletal 13 (437 aa).

The segment at 1-95 (MSCRFQSSSM…GVDGGLLSGN (95 aa)) is head. Arg27 and Arg35 each carry omega-N-methylarginine. The tract at residues 96 to 131 (EKITMQNLNDRLASYLDKVRALEAANADLEVKIRDW) is coil 1A. Residues 96–408 (EKITMQNLND…SLLEGQDAKM (313 aa)) form the IF rod domain. The interval 132 to 150 (HLKQSPASPERDYSAYYKT) is linker 1. Positions 151–242 (IEELRIKILE…KNHEEEMKEF (92 aa)) are coil 1B. The interval 243-265 (SNQVVGQVNVEMDATPGIDLTRV) is linker 12. The segment at 266-404 (LAEMREQYEA…ATYRSLLEGQ (139 aa)) is coil 2. The tract at residues 405-437 (DAKMTGFNSGGNNTTTSNGSPSSNSGRPDFRKY) is tail. A disordered region spans residues 408 to 437 (MTGFNSGGNNTTTSNGSPSSNSGRPDFRKY). A compositionally biased stretch (low complexity) spans 409 to 430 (TGFNSGGNNTTTSNGSPSSNSG).

Belongs to the intermediate filament family. As to quaternary structure, heterotetramer of two type I and two type II keratins. Post-translationally, O-glycosylated; glycans consist of single N-acetylglucosamine residues. Expressed in tongue epithelia (at protein level). Expressed in upper suprabasal layers of the corneal epithelium (at protein level).

In terms of biological role, type 1 keratin. Maintains postnatal tongue mucosal cell homeostasis and tissue organization in response to mechanical stress, potentially via regulation of the G1/S phase cyclins CCNE1 and CCNE2. This is Keratin, type I cytoskeletal 13 (Krt13) from Mus musculus (Mouse).